A 463-amino-acid polypeptide reads, in one-letter code: Asparagine--tRNA ligase (463 aa).

It belongs to the class-II aminoacyl-tRNA synthetase family. As to quaternary structure, homodimer.

The protein resides in the cytoplasm. The enzyme catalyses tRNA(Asn) + L-asparagine + ATP = L-asparaginyl-tRNA(Asn) + AMP + diphosphate + H(+). This Clostridium botulinum (strain ATCC 19397 / Type A) protein is Asparagine--tRNA ligase.